The following is a 285-amino-acid chain: Small ribosomal subunit biogenesis GTPase RsgA (285 aa).

The CP-type G domain maps to 56–217 (DNLLIRPIVA…IIDTPGFSSI (162 aa)). GTP-binding positions include 105–108 (NKID) and 159–167 (GPSGVGKSS). The Zn(2+) site is built by cysteine 241, cysteine 246, histidine 248, and cysteine 254.

It belongs to the TRAFAC class YlqF/YawG GTPase family. RsgA subfamily. As to quaternary structure, monomer. Associates with 30S ribosomal subunit, binds 16S rRNA. Zn(2+) is required as a cofactor.

Its subcellular location is the cytoplasm. Its function is as follows. One of several proteins that assist in the late maturation steps of the functional core of the 30S ribosomal subunit. Helps release RbfA from mature subunits. May play a role in the assembly of ribosomal proteins into the subunit. Circularly permuted GTPase that catalyzes slow GTP hydrolysis, GTPase activity is stimulated by the 30S ribosomal subunit. This is Small ribosomal subunit biogenesis GTPase RsgA from Fusobacterium nucleatum subsp. nucleatum (strain ATCC 25586 / DSM 15643 / BCRC 10681 / CIP 101130 / JCM 8532 / KCTC 2640 / LMG 13131 / VPI 4355).